Consider the following 699-residue polypeptide: Polyribonucleotide nucleotidyltransferase (699 aa).

Mg(2+) contacts are provided by aspartate 487 and aspartate 493. The KH domain maps to 554 to 613 (PRMLNMKINPEKIRDVIGKGGAVIRALQEETGTVIEIEDDGSITISSVSAEGAQKAKARI). The region spanning 623-691 (GKVYEGTVVR…ERGKIRLSMK (69 aa)) is the S1 motif domain.

The protein belongs to the polyribonucleotide nucleotidyltransferase family. Mg(2+) serves as cofactor.

The protein resides in the cytoplasm. It carries out the reaction RNA(n+1) + phosphate = RNA(n) + a ribonucleoside 5'-diphosphate. Functionally, involved in mRNA degradation. Catalyzes the phosphorolysis of single-stranded polyribonucleotides processively in the 3'- to 5'-direction. This Azoarcus sp. (strain BH72) protein is Polyribonucleotide nucleotidyltransferase.